The sequence spans 360 residues: Protein Wnt-2 (360 aa).

The N-terminal stretch at 1–25 (MNVPLGGIWLWLPLLLTWLTPEVSS) is a signal peptide. Cystine bridges form between cysteine 76/cysteine 87, cysteine 127/cysteine 135, cysteine 137/cysteine 157, cysteine 206/cysteine 220, cysteine 208/cysteine 215, cysteine 278/cysteine 309, cysteine 294/cysteine 304, cysteine 308/cysteine 348, cysteine 324/cysteine 339, cysteine 326/cysteine 336, and cysteine 331/cysteine 332. Serine 212 carries O-palmitoleoyl serine; by PORCN lipidation. N-linked (GlcNAc...) asparagine glycosylation is present at asparagine 295.

Belongs to the Wnt family. In terms of processing, palmitoleoylation is required for efficient binding to frizzled receptors. Depalmitoleoylation leads to Wnt signaling pathway inhibition. As to expression, in embryos in the developing allantois, pericardium heart, and ventral-lateral mesoderm; in adults in lung, brain, heart and placenta.

Its subcellular location is the secreted. The protein localises to the extracellular space. It is found in the extracellular matrix. Functionally, ligand for members of the frizzled family of seven transmembrane receptors. Functions in the canonical Wnt/beta-catenin signaling pathway. Functions as a upstream regulator of FGF10 expression. Plays an important role in embryonic lung development. May contribute to embryonic brain development by regulating the proliferation of dopaminergic precursors and neurons. The sequence is that of Protein Wnt-2 (Wnt2) from Mus musculus (Mouse).